A 202-amino-acid polypeptide reads, in one-letter code: Nuclear transcription factor Y subunit C-6 (202 aa).

Residues 1–16 (MAENNNNNGDNMNNDN) show a composition bias toward low complexity. Disordered stretches follow at residues 1 to 29 (MAEN…LPPM) and 180 to 202 (AWPA…GGGN). A compositionally biased stretch (polar residues) spans 17–29 (HQQPPSYSQLPPM).

The protein belongs to the NFYC/HAP5 subunit family. As to quaternary structure, heterotrimeric transcription factor composed of three components, NF-YA, NF-YB and NF-YC. NF-YB and NF-YC must interact and dimerize for NF-YA association and DNA binding. As to expression, expressed in flowers and siliques.

The protein localises to the nucleus. Its function is as follows. Stimulates the transcription of various genes by recognizing and binding to a CCAAT motif in promoters. The polypeptide is Nuclear transcription factor Y subunit C-6 (NFYC6) (Arabidopsis thaliana (Mouse-ear cress)).